The sequence spans 212 residues: V-type ATP synthase subunit E (212 aa).

This sequence belongs to the V-ATPase E subunit family.

In terms of biological role, produces ATP from ADP in the presence of a proton gradient across the membrane. The sequence is that of V-type ATP synthase subunit E from Nitrosococcus oceani (strain ATCC 19707 / BCRC 17464 / JCM 30415 / NCIMB 11848 / C-107).